The sequence spans 292 residues: Nitrogenase iron protein 2 (292 aa).

12–19 (GKGGIGKS) lines the ATP pocket. Cys-97 serves as a coordination point for [4Fe-4S] cluster. At Arg-100 the chain carries ADP-ribosylarginine; by dinitrogenase reductase ADP-ribosyltransferase. Cys-133 is a [4Fe-4S] cluster binding site.

The protein belongs to the NifH/BchL/ChlL family. Homodimer. Requires [4Fe-4S] cluster as cofactor. Post-translationally, the reversible ADP-ribosylation of Arg-100 inactivates the nitrogenase reductase and regulates nitrogenase activity.

It carries out the reaction N2 + 8 reduced [2Fe-2S]-[ferredoxin] + 16 ATP + 16 H2O = H2 + 8 oxidized [2Fe-2S]-[ferredoxin] + 2 NH4(+) + 16 ADP + 16 phosphate + 6 H(+). In terms of biological role, the key enzymatic reactions in nitrogen fixation are catalyzed by the nitrogenase complex, which has 2 components: the iron protein and the molybdenum-iron protein. This chain is Nitrogenase iron protein 2 (nifH2), found in Paenibacillus durus (Paenibacillus azotofixans).